We begin with the raw amino-acid sequence, 889 residues long: Cytoplasmic aconitate hydratase (889 aa).

Substrate-binding positions include Gln86 and Asp205 to His207. Positions 437, 503, and 506 each coordinate [4Fe-4S] cluster. Substrate is bound by residues Arg536, Arg541, Arg699, and Ser779–Arg780.

This sequence belongs to the aconitase/IPM isomerase family. It depends on [4Fe-4S] cluster as a cofactor.

It is found in the cytoplasm. The protein localises to the cytosol. It catalyses the reaction citrate = D-threo-isocitrate. Bifunctional iron sensor that switches between 2 activities depending on iron availability. Iron deprivation, promotes its mRNA binding activity through which it regulates the expression of genes involved in iron uptake, sequestration and utilization. Binds to iron-responsive elements (IRES) in the untranslated region of target mRNAs preventing for instance the translation of ferritin and aminolevulinic acid synthase and stabilizing the transferrin receptor mRNA. In terms of biological role, conversely, when cellular iron levels are high, binds a 4Fe-4S cluster which precludes RNA binding activity and promotes the aconitase activity, the isomerization of citrate to isocitrate via cis-aconitate. The polypeptide is Cytoplasmic aconitate hydratase (ACO1) (Gallus gallus (Chicken)).